A 657-amino-acid polypeptide reads, in one-letter code: Oleate activated transcription factor 3 (657 aa).

Positions 21 to 48 (CLNCRRRKTKCDRGKPSCSNCLKLGETC) form a DNA-binding region, zn(2)-C6 fungal-type.

The protein belongs to the OAF3 family.

The protein resides in the cytoplasm. It localises to the nucleus. It is found in the mitochondrion. Transcriptional inhibitor with a significantly increased number of target genes in response to oleate. The protein is Oleate activated transcription factor 3 (OAF3) of Kluyveromyces lactis (strain ATCC 8585 / CBS 2359 / DSM 70799 / NBRC 1267 / NRRL Y-1140 / WM37) (Yeast).